We begin with the raw amino-acid sequence, 336 residues long: Mitochondrial import receptor subunit TOM40 homolog (336 aa).

The interval 1–58 (MGNVLAASSPAPPAAGSPPAPGLVSVPPGFTMPPVAGLTPTPDKKETQEDRLPNPGTF) is disordered. Pro residues predominate over residues 10 to 21 (PAPPAAGSPPAP). Residues 42–52 (PDKKETQEDRL) show a composition bias toward basic and acidic residues.

It belongs to the Tom40 family. Forms part of the preprotein translocase complex of the outer mitochondrial membrane (TOM complex). Interacts with mitochondrial targeting sequences.

It is found in the mitochondrion outer membrane. Channel-forming protein essential for import of protein precursors into mitochondria. The chain is Mitochondrial import receptor subunit TOM40 homolog (tomm40) from Xenopus tropicalis (Western clawed frog).